Reading from the N-terminus, the 583-residue chain is Protein cps3 (583 aa).

2 consecutive C3H1-type zinc fingers follow at residues 35-62 (SLQH…HDLE) and 64-91 (ATEK…HVLP). Disordered regions lie at residues 318-346 (LGRP…NGST), 471-490 (KVSS…YNGT), and 504-532 (RQES…KNLG). Polar residues-rich tracts occupy residues 323-334 (KSPSVPTSVGSN), 475-490 (NLNS…YNGT), and 513-532 (PSLN…KNLG).

It localises to the cytoplasm. Functionally, responsible for supersensitivity to the spindle poison, isopropyl N-3-chlorophenyl carbamate. Has a role in meiosis. In Schizosaccharomyces pombe (strain 972 / ATCC 24843) (Fission yeast), this protein is Protein cps3 (cps3).